Consider the following 237-residue polypeptide: MSLFAAIGYMVREVFVFVSYVKNNAFPQPLSSDDERKYLELMEQGDAQARNLLIEHNLRLVAHIVKKFENTGEDAEDLISIGTIGLIKAIESYSAGKGTKLATYAARCIENEILMHLRVLKKTKKDVSLHDPIGQDKEGNEISLIDILKSESEDVIDMIQLSMELEKIKEYIDILDEREKEVIVKRFGLGLDKEKTQREIAKALGISRSYVSRIEKRALMKMFHEFVRAEKEKKAKE.

Positions 1 to 19 (MSLFAAIGYMVREVFVFVS) are excised as a propeptide. The short motif at 77-90 (DLISIGTIGLIKAI) is the Polymerase core binding element. The segment at residues 197-206 (QREIAKALGI) is a DNA-binding region (H-T-H motif).

Belongs to the sigma-70 factor family. In terms of processing, proteolytically cleaved in the N-terminus probably by a SpoIIGA homolog to yield the active peptide.

In terms of biological role, sigma factors are initiation factors that promote the attachment of RNA polymerase to specific initiation sites and are then released. This sigma factor directs the transcription of crystal protein genes, a sporulation-regulated event. The sequence is that of RNA polymerase sigma-28 factor (sigK) from Bacillus thuringiensis subsp. kurstaki.